The chain runs to 130 residues: Large ribosomal subunit protein bL19 (130 aa).

The protein belongs to the bacterial ribosomal protein bL19 family.

This protein is located at the 30S-50S ribosomal subunit interface and may play a role in the structure and function of the aminoacyl-tRNA binding site. The protein is Large ribosomal subunit protein bL19 of Gluconobacter oxydans (strain 621H) (Gluconobacter suboxydans).